We begin with the raw amino-acid sequence, 569 residues long: Proline--tRNA ligase (569 aa).

This sequence belongs to the class-II aminoacyl-tRNA synthetase family. ProS type 1 subfamily. In terms of assembly, homodimer.

Its subcellular location is the cytoplasm. It catalyses the reaction tRNA(Pro) + L-proline + ATP = L-prolyl-tRNA(Pro) + AMP + diphosphate. Its function is as follows. Catalyzes the attachment of proline to tRNA(Pro) in a two-step reaction: proline is first activated by ATP to form Pro-AMP and then transferred to the acceptor end of tRNA(Pro). As ProRS can inadvertently accommodate and process non-cognate amino acids such as alanine and cysteine, to avoid such errors it has two additional distinct editing activities against alanine. One activity is designated as 'pretransfer' editing and involves the tRNA(Pro)-independent hydrolysis of activated Ala-AMP. The other activity is designated 'posttransfer' editing and involves deacylation of mischarged Ala-tRNA(Pro). The misacylated Cys-tRNA(Pro) is not edited by ProRS. The protein is Proline--tRNA ligase of Latilactobacillus sakei subsp. sakei (strain 23K) (Lactobacillus sakei subsp. sakei).